A 373-amino-acid polypeptide reads, in one-letter code: GDSL esterase/lipase LIP-4 (373 aa).

Positions 1 to 32 (MATLFLYSNTFSFFFITLVSLALLILRQPSRA) are cleaved as a signal peptide. Ser-47 acts as the Nucleophile in catalysis. Asn-93 carries an N-linked (GlcNAc...) asparagine glycan. Residues Asp-339 and His-342 contribute to the active site.

It belongs to the 'GDSL' lipolytic enzyme family.

The protein resides in the secreted. This is GDSL esterase/lipase LIP-4 (LIP4) from Arabidopsis thaliana (Mouse-ear cress).